Here is a 765-residue protein sequence, read N- to C-terminus: Membrane metallo-endopeptidase-like 1 (765 aa).

At 1–19 the chain is on the cytoplasmic side; the sequence is MVERAGWCRKKSPGFVEYG. Residues 20-40 form a helical; Signal-anchor for type II membrane protein membrane-spanning segment; that stretch reads LMVLLLLLLGAIVTLGVFYSI. Over 41-765 the chain is Lumenal; it reads GKQLPLLTSL…MHPMKRCRIW (725 aa). The Peptidase M13 domain maps to 74 to 765; sequence ICTTPSCVIA…MHPMKRCRIW (692 aa). Disulfide bonds link C75–C80, C98–C750, C106–C710, C161–C425, and C636–C762. An a peptide-binding site is contributed by R121. 4 N-linked (GlcNAc...) asparagine glycosylation sites follow: N163, N279, N303, and N336. Residues 523-549 are a coiled coil; that stretch reads FENGLQNLKNNAQRSLKKLREKVDQNL. Position 599 (H599) interacts with Zn(2+). E600 is a catalytic residue. Residues H603 and E662 each contribute to the Zn(2+) site. D666 functions as the Proton donor in the catalytic mechanism. N-linked (GlcNAc...) asparagine glycosylation is present at N694.

Belongs to the peptidase M13 family. Zn(2+) serves as cofactor. In terms of processing, N-glycosylated. Highly expressed in testis. Also expressed in ovary. Weakly or not expressed in brain, lung, heart, liver, kidney, adrenal gland and intestine.

The protein resides in the membrane. It localises to the secreted. It catalyses the reaction Preferential cleavage of polypeptides between hydrophobic residues, particularly with Phe or Tyr at P1'.. Its activity is regulated as follows. Inhibited by thiorphan and phosphoramidon. Functionally, metalloprotease involved in sperm function, possibly by modulating the processes of fertilization and early embryonic development. Degrades a broad variety of small peptides with a preference for peptides shorter than 3 kDa containing neutral bulky aliphatic or aromatic amino acid residues. Shares the same substrate specificity with MME and cleaves peptides at the same amide bond. This chain is Membrane metallo-endopeptidase-like 1 (Mmel1), found in Mus musculus (Mouse).